We begin with the raw amino-acid sequence, 364 residues long: SH3 and cysteine-rich domain-containing protein 3 (364 aa).

Disordered regions lie at residues 1–89 (MTEK…NDKP) and 189–244 (NKER…HKQP). Residues 64 to 78 (YEEEEEEEEEEEEPP) are compositionally biased toward acidic residues. A Phorbol-ester/DAG-type zinc finger spans residues 89–140 (PHKFKDHFFKKPKFCDVCARMIVLNNKFGLRCKNCKTNIHEHCQSYVEMQRC). Residues 212 to 242 (ESARPEEGKPQDGNPEGDKKAEKKTPDDKHK) show a composition bias toward basic and acidic residues. 2 consecutive SH3 domains span residues 247–306 (QQSH…RVRA) and 307–364 (GERV…LEEI).

Interacts (via SH3 domains) with the calcium channels CACNA1S and CACNA1C. Component of a calcium channel complex with CACNA1S and CACNB1. Component of a calcium channel complex with CACNA1C and CACNB1.

It is found in the cytoplasm. The protein resides in the cell membrane. The protein localises to the sarcolemma. Its subcellular location is the T-tubule. Required for normal excitation-contraction coupling in skeletal muscle and for normal muscle contraction in response to membrane depolarization. Required for normal Ca(2+) release from the sarcplasmic reticulum, which ultimately leads to muscle contraction. Probably functions via its effects on muscle calcium channels. Increases CACNA1S channel activity, in addition to its role in enhancing the expression of CACNA1S at the cell membrane. Has a redundant role in promoting the expression of the calcium channel CACNA1S at the cell membrane. Slows down the inactivation rate of the calcium channel CACNA1C. The polypeptide is SH3 and cysteine-rich domain-containing protein 3 (STAC3) (Homo sapiens (Human)).